A 574-amino-acid polypeptide reads, in one-letter code: Sentrin-specific protease 3 (574 aa).

The disordered stretch occupies residues 1-125 (MKETIQGTGS…PTHRKTCSQR (125 aa)). 3 positions are modified to phosphoserine: Ser54, Ser73, and Ser75. Residues 74–93 (ASEEEEEEEEEEDEDEEEEV) are compositionally biased toward acidic residues. The span at 112 to 125 (RPSRPTHRKTCSQR) shows a compositional bias: basic residues. 2 short sequence motifs (nuclear localization signal) span residues 125–128 (RRRR) and 153–159 (RHRGRRR). The tract at residues 161 to 181 (LAHPKNHLSPQQGGATPQVPS) is disordered. Ser169 carries the phosphoserine modification. Position 176 is a phosphothreonine (Thr176). Phosphoserine is present on residues Ser181, Ser188, Ser212, and Ser232. Residues 386–543 (HVLTMDDLGT…AFVLQYCKHL (158 aa)) form a protease region. Active-site residues include His465 and Asp482. The Nucleophile role is filled by Cys532.

It belongs to the peptidase C48 family. Component of some MLL1/MLL complex, at least composed of the core components KMT2A/MLL1, ASH2L, HCFC1/HCF1, WDR5 and RBBP5, as well as the facultative components BACC1, CHD8, E2F6, HSP70, INO80C, KANSL1, LAS1L, MAX, MCRS1, MGA, MYST1/MOF, PELP1, PHF20, PRP31, RING2, RUVB1/TIP49A, RUVB2/TIP49B, SENP3, TAF1, TAF4, TAF6, TAF7, TAF9 and TEX10. Interacts with EP300, NPM1 and CDCA8. Component of the 5FMC complex, at least composed of PELP1, LAS1L, TEX10, WDR18 and SENP3; the complex interacts with methylated CHTOP and ZNF148. Interacts with NOL9. Interacts with CCAR2.

Its subcellular location is the nucleus. The protein resides in the nucleolus. It is found in the nucleoplasm. It localises to the cytoplasm. Its activity is regulated as follows. On oxidative stress, SENP3 degradation is blocked by inhibition of its ubiquitination, which stabilizes it as it accumulates in the nucleoplasm. In terms of biological role, protease that releases SUMO2 and SUMO3 monomers from sumoylated substrates, but has only weak activity against SUMO1 conjugates. Deconjugates SUMO2 from MEF2D, which increases its transcriptional activation capability. Deconjugates SUMO2 and SUMO3 from CDCA8. Redox sensor that, when redistributed into nucleoplasm, can act as an effector to enhance HIF1A transcriptional activity by desumoylating EP300. Required for rRNA processing through deconjugation of SUMO2 and SUMO3 from nucleophosmin, NPM1. Plays a role in the regulation of sumoylation status of ZNF148. Functions as a component of the Five Friends of Methylated CHTOP (5FMC) complex; the 5FMC complex is recruited to ZNF148 by methylated CHTOP, leading to desumoylation of ZNF148 and subsequent transactivation of ZNF148 target genes. Deconjugates SUMO2 from KAT5. Catalyzes desumoylation of MRE11. The chain is Sentrin-specific protease 3 from Homo sapiens (Human).